A 283-amino-acid chain; its full sequence is Bifunctional protein FolD (283 aa).

166–168 (GAS) contributes to the NADP(+) binding site.

This sequence belongs to the tetrahydrofolate dehydrogenase/cyclohydrolase family. Homodimer.

The catalysed reaction is (6R)-5,10-methylene-5,6,7,8-tetrahydrofolate + NADP(+) = (6R)-5,10-methenyltetrahydrofolate + NADPH. The enzyme catalyses (6R)-5,10-methenyltetrahydrofolate + H2O = (6R)-10-formyltetrahydrofolate + H(+). It functions in the pathway one-carbon metabolism; tetrahydrofolate interconversion. Its function is as follows. Catalyzes the oxidation of 5,10-methylenetetrahydrofolate to 5,10-methenyltetrahydrofolate and then the hydrolysis of 5,10-methenyltetrahydrofolate to 10-formyltetrahydrofolate. The chain is Bifunctional protein FolD from Coxiella burnetii (strain CbuG_Q212) (Coxiella burnetii (strain Q212)).